Reading from the N-terminus, the 169-residue chain is 6,7-dimethyl-8-ribityllumazine synthase (169 aa).

5-amino-6-(D-ribitylamino)uracil-binding positions include Trp-27, 61-63 (SYE), and 90-92 (VLI). Residue 95–96 (ST) coordinates (2S)-2-hydroxy-3-oxobutyl phosphate. His-98 acts as the Proton donor in catalysis. Phe-123 is a binding site for 5-amino-6-(D-ribitylamino)uracil. Arg-137 lines the (2S)-2-hydroxy-3-oxobutyl phosphate pocket.

This sequence belongs to the DMRL synthase family. Homopentamer.

The protein localises to the mitochondrion intermembrane space. The catalysed reaction is (2S)-2-hydroxy-3-oxobutyl phosphate + 5-amino-6-(D-ribitylamino)uracil = 6,7-dimethyl-8-(1-D-ribityl)lumazine + phosphate + 2 H2O + H(+). Its pathway is cofactor biosynthesis; riboflavin biosynthesis; riboflavin from 2-hydroxy-3-oxobutyl phosphate and 5-amino-6-(D-ribitylamino)uracil: step 1/2. Its function is as follows. Catalyzes the formation of 6,7-dimethyl-8-ribityllumazine by condensation of 5-amino-6-(D-ribitylamino)uracil with 3,4-dihydroxy-2-butanone 4-phosphate. This is the penultimate step in the biosynthesis of riboflavin. This chain is 6,7-dimethyl-8-ribityllumazine synthase (RIB4), found in Saccharomyces cerevisiae (strain ATCC 204508 / S288c) (Baker's yeast).